Consider the following 241-residue polypeptide: Small ribosomal subunit protein uS2 (241 aa).

It belongs to the universal ribosomal protein uS2 family.

The polypeptide is Small ribosomal subunit protein uS2 (Hamiltonella defensa subsp. Acyrthosiphon pisum (strain 5AT)).